Reading from the N-terminus, the 64-residue chain is Bowman-Birk type trypsin inhibitor TI1 (64 aa).

5 cysteine pairs are disulfide-bonded: Cys9-Cys61, Cys10-Cys25, Cys15-Cys23, Cys32-Cys39, and Cys36-Cys49.

The protein belongs to the Bowman-Birk serine protease inhibitor family.

This chain is Bowman-Birk type trypsin inhibitor TI1, found in Coix lacryma-jobi (Job's tears).